A 323-amino-acid polypeptide reads, in one-letter code: Aquaporin-4 (323 aa).

Residues 1 to 36 (MSDRPTARRWGKCGPLCTRENIMVAFKGVWTQAFWK) lie on the Cytoplasmic side of the membrane. Residues Cys13 and Cys17 are each lipidated (S-palmitoyl cysteine). The helical transmembrane segment at 37-57 (AVTAEFLAMLIFVLLSLGSTI) threads the bilayer. Over 58-69 (NWGGTEKPLPVD) the chain is Extracellular. A helical transmembrane segment spans residues 70 to 89 (MVLISLCFGLSIATMVQCFG). Topologically, residues 90-93 (HISG) are cytoplasmic. Residues 94 to 101 (GHINPAVT) constitute an intramembrane region (discontinuously helical). Positions 97-99 (NPA) match the NPA 1 motif. The Cytoplasmic portion of the chain corresponds to 102–115 (VAMVCTRKISIAKS). Ser111 carries the post-translational modification Phosphoserine; by PKG. Residues 116 to 136 (VFYIAAQCLGAIIGAGILYLV) traverse the membrane as a helical segment. Over 137–155 (TPPSVVGGLGVTMVHGNLT) the chain is Extracellular. The N-linked (GlcNAc...) asparagine glycan is linked to Asn153. The chain crosses the membrane as a helical span at residues 156–176 (AGHGLLVELIITFQLVFTIFA). Residues 177 to 184 (SCDSKRTD) lie on the Cytoplasmic side of the membrane. A Phosphoserine; by PKC modification is found at Ser180. A helical membrane pass occupies residues 185–205 (VTGSIALAIGFSVAIGHLFAI). Asn206 is a glycosylation site (N-linked (GlcNAc...) asparagine). The Extracellular portion of the chain corresponds to 206–208 (NYT). An intramembrane region (discontinuously helical) is located at residues 209–222 (GASMNPARSFGPAV). The NPA 2 motif lies at 213–215 (NPA). At 223 to 231 (IMGNWENHW) the chain is on the extracellular side. A helical membrane pass occupies residues 232-252 (IYWVGPIIGAVLAGGLYEYVF). The Cytoplasmic portion of the chain corresponds to 253 to 323 (CPDVEFKRRF…DQSGEVLSSV (71 aa)). 2 positions are modified to phosphoserine: Ser276 and Ser285. The residue at position 289 (Thr289) is a Phosphothreonine. At Ser321 the chain carries Phosphoserine.

This sequence belongs to the MIP/aquaporin (TC 1.A.8) family. Homotetramer. The tetramers can form oligomeric arrays in membranes. The size of the oligomers differs between tissues and is smaller in skeletal muscle than in brain. Interaction between AQP4 oligomeric arrays in close-by cells can contribute to cell-cell adhesion. Part of a complex containing MLC1, TRPV4, HEPACAM and ATP1B1. Phosphorylation by PKC at Ser-180 reduces conductance by 50%. Phosphorylation by PKG at Ser-111 in response to glutamate increases conductance by 40%. Post-translationally, isoform 2: Palmitoylated on its N-terminal region. Isoform 1: Not palmitoylated. In terms of tissue distribution, detected in skeletal muscle. Detected in stomach, along the glandular base region of the fundic gland (at protein level). Detected in brain, lung and skeletal muscle, and at much lower levels in heart and ovary.

It localises to the cell membrane. The protein localises to the basolateral cell membrane. The protein resides in the endosome membrane. Its subcellular location is the sarcolemma. It is found in the cell projection. It carries out the reaction H2O(in) = H2O(out). Forms a water-specific channel. Plays an important role in brain water homeostasis. It is involved in glymphatic solute transport and is required for a normal rate of water exchange across the blood brain interface. Required for normal levels of cerebrospinal fluid influx into the brain cortex and parenchyma along paravascular spaces that surround penetrating arteries, and for normal drainage of interstitial fluid along paravenous drainage pathways. Thereby, it is required for normal clearance of solutes from the brain interstitial fluid, including soluble beta-amyloid peptides derived from APP. Plays a redundant role in urinary water homeostasis and urinary concentrating ability. This is Aquaporin-4 (AQP4) from Homo sapiens (Human).